A 458-amino-acid chain; its full sequence is F-box/FBD/LRR-repeat protein At1g78750 (458 aa).

Positions 17-67 constitute an F-box domain; that stretch reads VDWISNLPETLLCQVLFYLPTKDVVKSSVLSSRWRNLWKYVPGFNLSYCDF. LRR repeat units follow at residues 152–183, 184–209, 231–258, 302–327, and 345–370; these read CETLVYLTLDGLSLASPKFVSLPSLKELHLSI, VKFADHMALETLISQCPVLENLNINR, VADTDEMLNEDLVVAIDAPKLKYLRLSD, DFLVGISSIKTLIIASSTLEVIYDYS, and FYGYKWEMLPIFLESCPNLKSLVVGS. An FBD domain is found at 376 to 428; that stretch reads KEGINILSVPRGFLSSLEYVKIERPLKGEAMEMKLVSYLLENSTILKKLTLCL.

The polypeptide is F-box/FBD/LRR-repeat protein At1g78750 (Arabidopsis thaliana (Mouse-ear cress)).